We begin with the raw amino-acid sequence, 276 residues long: Putative ripening-related protein 5 (276 aa).

Residues 1–18 form the signal peptide; sequence MAMIFLLAALSTTHLASS.

It belongs to the kiwellin family.

The protein resides in the secreted. The polypeptide is Putative ripening-related protein 5 (Oryza sativa subsp. japonica (Rice)).